A 269-amino-acid chain; its full sequence is NAD-capped RNA hydrolase NudC (269 aa).

Arginine 81 contributes to the substrate binding site. Zn(2+) is bound by residues cysteine 110, cysteine 113, cysteine 128, and cysteine 131. Substrate is bound at residue tyrosine 136. The Nudix hydrolase domain occupies 137–260 (PRIFPCIIVA…TIARALIEQT (124 aa)). Residues alanine 170, glutamate 186, and glutamate 190 each coordinate a divalent metal cation. The Nudix box motif lies at 171–192 (GFVEVGETLEQCVAREVLEETG). 204–211 (QPWAFPSS) provides a ligand contact to substrate. Residue glutamate 231 participates in a divalent metal cation binding. Position 253 (alanine 253) interacts with substrate.

This sequence belongs to the Nudix hydrolase family. NudC subfamily. In terms of assembly, homodimer. The cofactor is Mg(2+). Mn(2+) serves as cofactor. Requires Zn(2+) as cofactor.

It carries out the reaction a 5'-end NAD(+)-phospho-ribonucleoside in mRNA + H2O = a 5'-end phospho-adenosine-phospho-ribonucleoside in mRNA + beta-nicotinamide D-ribonucleotide + 2 H(+). The catalysed reaction is NAD(+) + H2O = beta-nicotinamide D-ribonucleotide + AMP + 2 H(+). It catalyses the reaction NADH + H2O = reduced beta-nicotinamide D-ribonucleotide + AMP + 2 H(+). Functionally, mRNA decapping enzyme that specifically removes the nicotinamide adenine dinucleotide (NAD) cap from a subset of mRNAs by hydrolyzing the diphosphate linkage to produce nicotinamide mononucleotide (NMN) and 5' monophosphate mRNA. The NAD-cap is present at the 5'-end of some mRNAs and stabilizes RNA against 5'-processing. Has preference for mRNAs with a 5'-end purine. Catalyzes the hydrolysis of a broad range of dinucleotide pyrophosphates. This chain is NAD-capped RNA hydrolase NudC, found in Vibrio cholerae serotype O1 (strain ATCC 39315 / El Tor Inaba N16961).